Consider the following 146-residue polypeptide: Hemoglobin subunit beta (146 aa).

At valine 1 the chain carries N-acetylvaline. Residues 2–146 enclose the Globin domain; sequence HLTADEKVSL…VANALAHKYH (145 aa). Residue serine 44 is modified to Phosphoserine. An N6-acetyllysine modification is found at lysine 59. Histidine 63 is a heme b binding site. The residue at position 82 (lysine 82) is an N6-acetyllysine. Histidine 92 contacts heme b. An S-nitrosocysteine modification is found at cysteine 93. An N6-acetyllysine modification is found at lysine 144.

Belongs to the globin family. In terms of assembly, heterotetramer of two alpha chains and two beta chains. As to expression, red blood cells.

Its function is as follows. Involved in oxygen transport from the lung to the various peripheral tissues. The chain is Hemoglobin subunit beta from Tamias striatus (Eastern chipmunk).